The chain runs to 1314 residues: MGAASGQRGQGPPSPLLLLWLSLLLLLLPPSPAPALDPGLQPGNFSADEIGAHLFAESYNSSAEQVIFQSTVASWAYDTNMTEENARLQEEAELIWQEFAEVWGKKAKELFDAIRQNFTDSKLRRVIETIRTLGPANLPLARRQQYNSLQNNMNRIYSTSKVCLPNKTATCWSLEPELTNILASSRSYAKLLFAWESWHDVVGIPLKPLYQDFTALSNEAYKQDGFSDTGAYWRSAYDSPSFEETLEHLYHQLEPLYLNLHAYVRRALHRRYGDKYINLRGPIPAHLLGDMWAQSWDNIYDMVVPFPNKPNLDVTNTMVQKGWNVTHMFRVAEEFFTSMGLSPMPPEFWAESMLEKPTDGREVVCHASAWDFFNRKDFRIKQCTRITMEQLSTVHHEMGHVQYYLQYKDLTVPLRRGANPGFHEAIGDVLALSVSTPAHLHKIGLLDRVANDLESDINYLLKMALEKIAFLPFGYLVDQWRWGVFSGHTPPSRYNFDWWYFRTKYQGICPPVVRNETHFDAGAKFHIPSGTPYIRYFVSFILQFQFHQALCKEAGHQGPLHQCDIYQSTQAGAKLQRVLQAGYSRPWQEVLKEMVGSDTLDAQALLEYFQPVIRWLQEQNQRNGEVLGWPEYQWRPPLPDNYPEGIDLVTDETEAERFVEEYDRTARVLWNEYAEANWQYNTNITLEASKILLQKNKKVANHTLKYGTLAKKFDVSNFQNYTIKRIIKKVQNMDRAVLPPKELEEYNQILMDMETTYSIANVCYLNGTCLHLEPDLTNVMATSRKYEELLWVWKSWRDKVGRAILPLFPKYVELSNKIAHLNGYADGGDSWRSSYESKSLEQDLEQLYQELQPLYLNLHAYVRRSLHRHYGSQHINLDGPIPAHLLGNMWAQTWSNIYDLVAPFPSAPNLDATEAMIKQGWTPRRIFKEADDFFTSLGLLPVSEEFWNKSMLEKPGDGREVVCHASAWDFYNGKDFRIKQCTSVNMEDLVIAHHEMGHIQYFMQYKDLPVTFREGANPGFHEAIGDVLALSVSTPKHLHSLNLLSSEGGGYEHDINFLMKMALDKIAFIPFSYLIDQWRWRVFDGSITKENYNQEWWSLRLKYQGLCPPVPRSQDDFDPGSKFHVPANVPYIRYFVSFIIQFQFHEALCRAAGHTGPLHKCDIYQSKEAGKLLADTMKMGYSKPWPEAMKLITGQPNMSASAMMNYFKPLTEWLVTENRRHGETLGWPEYNWTPNTARSEGPFPESGRVNFLGMYLEPQQARVGQWVLLFLGVSLLVATLGLTHRLFSIRQHGHSLHRPHRGPQFGSEVELRHS.

The signal sequence occupies residues 1–35 (MGAASGQRGQGPPSPLLLLWLSLLLLLLPPSPAPA). The Extracellular segment spans residues 36 to 1265 (LDPGLQPGNF…LEPQQARVGQ (1230 aa)). Residues Asn-44, Asn-60, Asn-80, Asn-117, and Asn-166 are each glycosylated (N-linked (GlcNAc...) asparagine). Peptidase M2 domains are found at residues 46–630 (SADE…LGWP) and 649–1228 (VTDE…LGWP). A disulfide bond links Cys-163 and Cys-171. Residue Tyr-237 coordinates chloride. N-linked (GlcNAc...) asparagine glycosylation is present at Asn-324. A disulfide bridge links Cys-365 with Cys-383. Residue His-396 coordinates Zn(2+). The Proton acceptor 1 role is filled by Glu-397. Zn(2+) is bound by residues His-400 and Glu-424. N-linked (GlcNAc...) asparagine glycosylation occurs at Asn-515. The Proton donor 1 role is filled by His-526. Position 535 (Arg-535) interacts with chloride. Cys-551 and Cys-563 are disulfide-bonded. N-linked (GlcNAc...) asparagine glycosylation is found at Asn-683, Asn-701, Asn-720, and Asn-766. The cysteines at positions 763 and 769 are disulfide-linked. Positions 797 and 835 each coordinate chloride. Asn-948 carries N-linked (GlcNAc...) asparagine glycosylation. A disulfide bridge connects residues Cys-963 and Cys-981. Residue His-994 participates in Zn(2+) binding. The active-site Proton acceptor 2 is Glu-995. Residues His-998 and Glu-1022 each contribute to the Zn(2+) site. Chloride contacts are provided by Trp-1096 and Arg-1100. The active-site Proton donor 2 is His-1124. Arg-1133 contacts chloride. Cysteines 1149 and 1161 form a disulfide. Asn-1197 carries an N-linked (GlcNAc...) asparagine glycan. A juxtamembrane stalk region spans residues 1221–1262 (HGETLGWPEYNWTPNTARSEGPFPESGRVNFLGMYLEPQQAR). Residues 1266–1282 (WVLLFLGVSLLVATLGL) form a helical membrane-spanning segment. At 1283–1314 (THRLFSIRQHGHSLHRPHRGPQFGSEVELRHS) the chain is on the cytoplasmic side. The interval 1293 to 1314 (GHSLHRPHRGPQFGSEVELRHS) is disordered. Ser-1307 carries the phosphoserine modification.

Belongs to the peptidase M2 family. As to quaternary structure, monomer and homodimer; homodimerizes following binding to an inhibitor. Interacts with calmodulin (CALM1, CALM2 or CALM3); interaction takes place in the cytoplasmic region and regulates phosphorylation and proteolytic cleavage. Zn(2+) serves as cofactor. The cofactor is chloride. Produced following proteolytic cleavage by secretase enzymes that cleave the transmembrane form in the juxtamembrane stalk region upstream of the transmembrane region. Cleavage can take place at different sites of the juxtamembrane stalk region. In terms of processing, phosphorylated by CK2 on Ser-1307; which allows membrane retention. Phosphorylated on tyrosine residues on its extracellular part, promoting cleavage by secretase enzymes and formation of the soluble form (Angiotensin-converting enzyme, soluble form). Widely expressed with dominant expression in lung and kidney.

It is found in the cell membrane. Its subcellular location is the cytoplasm. The protein localises to the secreted. It carries out the reaction Release of a C-terminal dipeptide, oligopeptide-|-Xaa-Yaa, when Xaa is not Pro, and Yaa is neither Asp nor Glu. Thus, conversion of angiotensin I to angiotensin II, with increase in vasoconstrictor activity, but no action on angiotensin II.. The enzyme catalyses angiotensin I + H2O = L-histidyl-L-leucine + angiotensin II. It catalyses the reaction bradykinin + H2O = L-Phe-L-Arg + bradykinin(1-7). The catalysed reaction is substance P + H2O = substance P(1-9) + L-Leu-L-Met-NH2. It carries out the reaction substance P + H2O = substance P(1-8) + Gly-L-Leu-L-Met-NH2. The enzyme catalyses substance P + H2O = L-Phe-L-Phe-Gly-L-Leu-L-Met-NH2 + substance P(1-6). It catalyses the reaction neurotensin + H2O = neurotensin(1-11) + L-isoleucyl-L-leucine. The catalysed reaction is goralatide + H2O = N-acetyl-L-seryl-L-aspartate + L-lysyl-L-proline. It carries out the reaction Met-enkephalin + H2O = L-phenylalanyl-L-methionine + L-tyrosylglycylglycine. The enzyme catalyses Leu-enkephalin + H2O = L-tyrosylglycylglycine + L-phenylalanyl-L-leucine. It catalyses the reaction Met-enkephalin-Arg-Phe + H2O = L-arginyl-L-phenylalanine + Met-enkephalin. The dipeptidyl carboxypeptidase activity is strongly activated by chloride. The dipeptidyl carboxypeptidase activity is specifically inhibited by lisinopril, captopril and enalaprilat. Its activity is regulated as follows. Strongly inhibited by lisinopril and captopril. Its function is as follows. Dipeptidyl carboxypeptidase that removes dipeptides from the C-terminus of a variety of circulating hormones, such as angiotensin I, bradykinin or enkephalins, thereby playing a key role in the regulation of blood pressure, electrolyte homeostasis or synaptic plasticity. Composed of two similar catalytic domains, each possessing a functional active site, with different selectivity for substrates. Plays a major role in the angiotensin-renin system that regulates blood pressure and sodium retention by the kidney by converting angiotensin I to angiotensin II, resulting in an increase of the vasoconstrictor activity of angiotensin. Also able to inactivate bradykinin, a potent vasodilator, and therefore enhance the blood pressure response. Acts as a regulator of synaptic transmission by mediating cleavage of neuropeptide hormones, such as substance P, neurotensin or enkephalins. Catalyzes degradation of different enkephalin neuropeptides (Met-enkephalin, Leu-enkephalin, Met-enkephalin-Arg-Phe and possibly Met-enkephalin-Arg-Gly-Leu). Acts as a regulator of synaptic plasticity in the nucleus accumbens of the brain by mediating cleavage of Met-enkephalin-Arg-Phe, a strong ligand of Mu-type opioid receptor OPRM1, into Met-enkephalin. Met-enkephalin-Arg-Phe cleavage by ACE decreases activation of OPRM1, leading to long-term synaptic potentiation of glutamate release. Also acts as a regulator of hematopoietic stem cell differentiation by mediating degradation of hemoregulatory peptide N-acetyl-SDKP (AcSDKP). Acts as a regulator of cannabinoid signaling pathway by mediating degradation of hemopressin, an antagonist peptide of the cannabinoid receptor CNR1. Involved in amyloid-beta metabolism by catalyzing degradation of Amyloid-beta protein 40 and Amyloid-beta protein 42 peptides, thereby preventing plaque formation. Catalyzes cleavage of cholecystokinin (maturation of Cholecystokinin-8 and Cholecystokinin-5) and Gonadoliberin-1 (both maturation and degradation) hormones. Degradation of hemoregulatory peptide N-acetyl-SDKP (AcSDKP) and amyloid-beta proteins is mediated by the N-terminal catalytic domain, while angiotensin I and cholecystokinin cleavage is mediated by the C-terminal catalytic region. Soluble form that is released in blood plasma and other body fluids following proteolytic cleavage in the juxtamembrane stalk region. Functionally, isoform produced by alternative promoter usage that is specifically expressed in spermatocytes and adult testis, and which is required for male fertility. In contrast to somatic isoforms, only contains one catalytic domain. Acts as a dipeptidyl carboxypeptidase that removes dipeptides from the C-terminus of substrates. The identity of substrates that are needed for male fertility is unknown. May also have a glycosidase activity which releases GPI-anchored proteins from the membrane by cleaving the mannose linkage in the GPI moiety. The GPIase activity was reported to be essential for the egg-binding ability of the sperm. This activity is however unclear and has been challenged by other groups, suggesting that it may be indirect. This Mesocricetus auratus (Golden hamster) protein is Angiotensin-converting enzyme.